An 87-amino-acid polypeptide reads, in one-letter code: Small ribosomal subunit protein bS20 (87 aa).

Residues 1-15 (MANHKSAMKRIKQTA) show a composition bias toward basic residues. The segment at 1–27 (MANHKSAMKRIKQTAKRTERNKHERST) is disordered. Residues 16-27 (KRTERNKHERST) are compositionally biased toward basic and acidic residues.

This sequence belongs to the bacterial ribosomal protein bS20 family.

Functionally, binds directly to 16S ribosomal RNA. The sequence is that of Small ribosomal subunit protein bS20 from Citrifermentans bemidjiense (strain ATCC BAA-1014 / DSM 16622 / JCM 12645 / Bem) (Geobacter bemidjiensis).